Here is a 130-residue protein sequence, read N- to C-terminus: Small ribosomal subunit protein uS9 (130 aa).

The tract at residues 110–130 (AKERKKYGRKGARARFQFSKR) is disordered. Residues 111–130 (KERKKYGRKGARARFQFSKR) are compositionally biased toward basic residues.

It belongs to the universal ribosomal protein uS9 family.

This Syntrophotalea carbinolica (strain DSM 2380 / NBRC 103641 / GraBd1) (Pelobacter carbinolicus) protein is Small ribosomal subunit protein uS9.